A 132-amino-acid polypeptide reads, in one-letter code: Protein NrdI (132 aa).

It belongs to the NrdI family.

Functionally, probably involved in ribonucleotide reductase function. The protein is Protein NrdI of Bartonella henselae (strain ATCC 49882 / DSM 28221 / CCUG 30454 / Houston 1) (Rochalimaea henselae).